The chain runs to 354 residues: 3-isopropylmalate dehydrogenase (354 aa).

Residue 76–87 (GPRWDGAKERPE) coordinates NAD(+). Arg94, Arg104, Arg130, and Asp215 together coordinate substrate. Residues Asp215, Asp239, and Asp243 each contribute to the Mg(2+) site. 273 to 285 (GSAPDIAGKNKAN) contacts NAD(+).

Belongs to the isocitrate and isopropylmalate dehydrogenases family. LeuB type 1 subfamily. In terms of assembly, homodimer. Mg(2+) serves as cofactor. Requires Mn(2+) as cofactor.

The protein resides in the cytoplasm. The catalysed reaction is (2R,3S)-3-isopropylmalate + NAD(+) = 4-methyl-2-oxopentanoate + CO2 + NADH. It functions in the pathway amino-acid biosynthesis; L-leucine biosynthesis; L-leucine from 3-methyl-2-oxobutanoate: step 3/4. Catalyzes the oxidation of 3-carboxy-2-hydroxy-4-methylpentanoate (3-isopropylmalate) to 3-carboxy-4-methyl-2-oxopentanoate. The product decarboxylates to 4-methyl-2 oxopentanoate. This is 3-isopropylmalate dehydrogenase from Bacillus thuringiensis subsp. konkukian (strain 97-27).